We begin with the raw amino-acid sequence, 350 residues long: Proton-activated chloride channel (350 aa).

The tract at residues 1-51 is disordered; the sequence is MEAIRKELSRSYQELNDETDPIARDPEGAQEEEQEEAASAVVPDRDSDRSN. Residues 1–63 lie on the Cytoplasmic side of the membrane; it reads MEAIRKELSR…VHFSRTCLKN (63 aa). A helical transmembrane segment spans residues 64–84; the sequence is VFSVLLIFVYLLLMGVAVFLV. Residues 85–297 are Extracellular-facing; sequence YQTITDFRDK…KDPYIQEIQD (213 aa). A helical membrane pass occupies residues 298 to 318; sequence IITANPWSMIALLCSVFLVLF. At 319 to 350 the chain is on the cytoplasmic side; the sequence is KAADFAKLSVKWMIKVRRRHLKKRTRELNHIS.

It belongs to the proton-activated chloride channel family.

The protein localises to the cell membrane. It catalyses the reaction chloride(in) = chloride(out). Chloride channel gated by pH that facilitates the entry of chloride ions into cells upon exposure to extracellular acidic pH. The sequence is that of Proton-activated chloride channel from Xenopus laevis (African clawed frog).